Reading from the N-terminus, the 878-residue chain is AP-5 complex subunit beta-1 (878 aa).

Positions 234–260 (RLQPQAPSWPAAEEGEGERSLTAREHS) are disordered. A compositionally biased stretch (basic and acidic residues) spans 250–260 (GERSLTAREHS).

As to quaternary structure, probably part of the adaptor protein complex 5 (AP-5), a tetramer composed of AP5B1, AP5M1, AP5S1 and AP5Z1. Interacts with ZFYVE26 and SPG11.

Functionally, as part of AP-5, a probable fifth adaptor protein complex it may be involved in endosomal transport. The sequence is that of AP-5 complex subunit beta-1 (AP5B1) from Homo sapiens (Human).